Here is a 226-residue protein sequence, read N- to C-terminus: ATP-dependent dethiobiotin synthetase BioD (226 aa).

Residue Gly-12–Val-17 participates in ATP binding. Position 16 (Thr-16) interacts with Mg(2+). Lys-37 is a catalytic residue. A substrate-binding site is contributed by Thr-41. ATP contacts are provided by residues Asp-49, Glu-108–Gly-111, Gly-169–Ser-170, and Pro-197–Gly-199. Residues Asp-49 and Glu-108 each coordinate Mg(2+).

Belongs to the dethiobiotin synthetase family. As to quaternary structure, homodimer. The cofactor is Mg(2+).

It is found in the cytoplasm. It carries out the reaction (7R,8S)-7,8-diammoniononanoate + CO2 + ATP = (4R,5S)-dethiobiotin + ADP + phosphate + 3 H(+). The protein operates within cofactor biosynthesis; biotin biosynthesis; biotin from 7,8-diaminononanoate: step 1/2. Its function is as follows. Catalyzes a mechanistically unusual reaction, the ATP-dependent insertion of CO2 between the N7 and N8 nitrogen atoms of 7,8-diaminopelargonic acid (DAPA, also called 7,8-diammoniononanoate) to form a ureido ring. This is ATP-dependent dethiobiotin synthetase BioD from Mycobacterium leprae (strain Br4923).